The sequence spans 425 residues: 3-phosphoshikimate 1-carboxyvinyltransferase (425 aa).

The 3-phosphoshikimate site is built by Lys-21, Ser-22, and Arg-26. Phosphoenolpyruvate is bound at residue Lys-21. Residues Gly-91 and Arg-119 each contribute to the phosphoenolpyruvate site. 3-phosphoshikimate contacts are provided by Ser-164, Gln-166, Asp-311, and Lys-338. Gln-166 contributes to the phosphoenolpyruvate binding site. The active-site Proton acceptor is Asp-311. Residues Arg-342 and Arg-383 each coordinate phosphoenolpyruvate.

Belongs to the EPSP synthase family. Monomer.

It localises to the cytoplasm. It catalyses the reaction 3-phosphoshikimate + phosphoenolpyruvate = 5-O-(1-carboxyvinyl)-3-phosphoshikimate + phosphate. The protein operates within metabolic intermediate biosynthesis; chorismate biosynthesis; chorismate from D-erythrose 4-phosphate and phosphoenolpyruvate: step 6/7. Its function is as follows. Catalyzes the transfer of the enolpyruvyl moiety of phosphoenolpyruvate (PEP) to the 5-hydroxyl of shikimate-3-phosphate (S3P) to produce enolpyruvyl shikimate-3-phosphate and inorganic phosphate. This chain is 3-phosphoshikimate 1-carboxyvinyltransferase, found in Campylobacter fetus subsp. fetus (strain 82-40).